The chain runs to 409 residues: Pentatricopeptide repeat-containing protein At1g01970 (409 aa).

PPR repeat units follow at residues 164-198 (NARDYTKIIHYYGKLNQVEDAERTLLSMKNRGFLI), 199-233 (DQVTLTAMVQLYSKAGCHKLAEETFNEIKLLGEPL), 234-268 (DYRSYGSMIMAYIRAGVPEKGESLLREMDSQEICA), 269-303 (GREVYKALLRDYSMGGDAEGAKRVFDAVQIAGITP), 304-338 (DVKLCGLLINAYSVSGQSQNARLAFENMRKAGIKA), and 339-373 (TDKCVALVLAAYEKEEKLNEALGFLVELEKDSIML).

Belongs to the PPR family. P subfamily.

This is Pentatricopeptide repeat-containing protein At1g01970 from Arabidopsis thaliana (Mouse-ear cress).